Reading from the N-terminus, the 133-residue chain is S-adenosylmethionine decarboxylase proenzyme (133 aa).

Ser64 functions as the Schiff-base intermediate with substrate; via pyruvic acid in the catalytic mechanism. Ser64 bears the Pyruvic acid (Ser); by autocatalysis mark. Residue His69 is the Proton acceptor; for processing activity of the active site. Cys84 serves as the catalytic Proton donor; for catalytic activity.

The protein belongs to the prokaryotic AdoMetDC family. Type 1 subfamily. Heterotetramer of two alpha and two beta chains arranged as a dimer of alpha/beta heterodimers. Pyruvate is required as a cofactor. In terms of processing, is synthesized initially as an inactive proenzyme. Formation of the active enzyme involves a self-maturation process in which the active site pyruvoyl group is generated from an internal serine residue via an autocatalytic post-translational modification. Two non-identical subunits are generated from the proenzyme in this reaction, and the pyruvate is formed at the N-terminus of the alpha chain, which is derived from the carboxyl end of the proenzyme. The post-translation cleavage follows an unusual pathway, termed non-hydrolytic serinolysis, in which the side chain hydroxyl group of the serine supplies its oxygen atom to form the C-terminus of the beta chain, while the remainder of the serine residue undergoes an oxidative deamination to produce ammonia and the pyruvoyl group blocking the N-terminus of the alpha chain.

It carries out the reaction S-adenosyl-L-methionine + H(+) = S-adenosyl 3-(methylsulfanyl)propylamine + CO2. Its pathway is amine and polyamine biosynthesis; S-adenosylmethioninamine biosynthesis; S-adenosylmethioninamine from S-adenosyl-L-methionine: step 1/1. In terms of biological role, catalyzes the decarboxylation of S-adenosylmethionine to S-adenosylmethioninamine (dcAdoMet), the propylamine donor required for the synthesis of the polyamines spermine and spermidine from the diamine putrescine. In Sulfurihydrogenibium sp. (strain YO3AOP1), this protein is S-adenosylmethionine decarboxylase proenzyme.